We begin with the raw amino-acid sequence, 251 residues long: 1-(5-phosphoribosyl)-5-[(5-phosphoribosylamino)methylideneamino] imidazole-4-carboxamide isomerase (251 aa).

Asp-8 acts as the Proton acceptor in catalysis. The active-site Proton donor is Asp-129.

This sequence belongs to the HisA/HisF family.

It localises to the cytoplasm. The enzyme catalyses 1-(5-phospho-beta-D-ribosyl)-5-[(5-phospho-beta-D-ribosylamino)methylideneamino]imidazole-4-carboxamide = 5-[(5-phospho-1-deoxy-D-ribulos-1-ylimino)methylamino]-1-(5-phospho-beta-D-ribosyl)imidazole-4-carboxamide. It participates in amino-acid biosynthesis; L-histidine biosynthesis; L-histidine from 5-phospho-alpha-D-ribose 1-diphosphate: step 4/9. This chain is 1-(5-phosphoribosyl)-5-[(5-phosphoribosylamino)methylideneamino] imidazole-4-carboxamide isomerase, found in Desulfosudis oleivorans (strain DSM 6200 / JCM 39069 / Hxd3) (Desulfococcus oleovorans).